Consider the following 221-residue polypeptide: Riboflavin kinase (221 aa).

The tract at residues 1 to 89 (MENIYIALKT…ISSILRFSQE (89 aa)) is H-T-H motif-like. The riboflavin kinase stretch occupies residues 90 to 221 (LKLVGAVQDG…EVLASIDGKL (132 aa)). 99–104 (GLGEGK) is a CDP binding site. The Mg(2+) site is built by Thr128 and Asn130. Residues Ser185 and Glu192 each coordinate FMN. 197 to 200 (KYLR) contacts CDP.

It belongs to the archaeal riboflavin kinase family. Requires Mg(2+) as cofactor.

It catalyses the reaction riboflavin + CTP = CDP + FMN + H(+). It participates in cofactor biosynthesis; FMN biosynthesis; FMN from riboflavin (CTP route): step 1/1. Its function is as follows. Catalyzes the CTP-dependent phosphorylation of riboflavin (vitamin B2) to form flavin mononucleotide (FMN). This chain is Riboflavin kinase (ribK), found in Picrophilus torridus (strain ATCC 700027 / DSM 9790 / JCM 10055 / NBRC 100828 / KAW 2/3).